We begin with the raw amino-acid sequence, 223 residues long: Deoxyribose-phosphate aldolase 2 (223 aa).

The Proton donor/acceptor role is filled by Asp-92. Lys-154 serves as the catalytic Schiff-base intermediate with acetaldehyde. The Proton donor/acceptor role is filled by Lys-183.

The protein belongs to the DeoC/FbaB aldolase family. DeoC type 1 subfamily.

It localises to the cytoplasm. It carries out the reaction 2-deoxy-D-ribose 5-phosphate = D-glyceraldehyde 3-phosphate + acetaldehyde. It functions in the pathway carbohydrate degradation; 2-deoxy-D-ribose 1-phosphate degradation; D-glyceraldehyde 3-phosphate and acetaldehyde from 2-deoxy-alpha-D-ribose 1-phosphate: step 2/2. Its function is as follows. Catalyzes a reversible aldol reaction between acetaldehyde and D-glyceraldehyde 3-phosphate to generate 2-deoxy-D-ribose 5-phosphate. This is Deoxyribose-phosphate aldolase 2 from Oceanobacillus iheyensis (strain DSM 14371 / CIP 107618 / JCM 11309 / KCTC 3954 / HTE831).